We begin with the raw amino-acid sequence, 478 residues long: Chromosomal replication initiator protein DnaA (478 aa).

A domain I, interacts with DnaA modulators region spans residues 1 to 90; that stretch reads MSVELWQQCV…KRSSAPRAVQ (90 aa). A domain II region spans residues 91–141; it reads PASPPPAVVQAAPVAIEEASAARTVDAQPVAPATVRTERSVQVEGGLKHTS. The segment at 142 to 358 is domain III, AAA+ region; the sequence is YLNRAFTFEN…GALKRVIAHS (217 aa). ATP is bound by residues Gly186, Gly188, Lys189, and Thr190. The tract at residues 359–478 is domain IV, binds dsDNA; the sequence is HFTNHPITIE…YKNLLRTLTT (120 aa).

The protein belongs to the DnaA family. In terms of assembly, oligomerizes as a right-handed, spiral filament on DNA at oriC.

The protein localises to the cytoplasm. In terms of biological role, plays an essential role in the initiation and regulation of chromosomal replication. ATP-DnaA binds to the origin of replication (oriC) to initiate formation of the DNA replication initiation complex once per cell cycle. Binds the DnaA box (a 9 base pair repeat at the origin) and separates the double-stranded (ds)DNA. Forms a right-handed helical filament on oriC DNA; dsDNA binds to the exterior of the filament while single-stranded (ss)DNA is stabiized in the filament's interior. The ATP-DnaA-oriC complex binds and stabilizes one strand of the AT-rich DNA unwinding element (DUE), permitting loading of DNA polymerase. After initiation quickly degrades to an ADP-DnaA complex that is not apt for DNA replication. Binds acidic phospholipids. In Azotobacter vinelandii (strain DJ / ATCC BAA-1303), this protein is Chromosomal replication initiator protein DnaA.